Consider the following 360-residue polypeptide: D-alanine--D-alanine ligase (360 aa).

One can recognise an ATP-grasp domain in the interval 149 to 353; the sequence is KKLMAAEGLP…YEELLDVLVQ (205 aa). 176 to 231 contacts ATP; it reads KNLLGLPVFVKPARGGSSIGISRVTAWEDFNKAVGLARAHDEKVIVESEIVGSEVE. Residues D308, E320, and N322 each coordinate Mg(2+).

It belongs to the D-alanine--D-alanine ligase family. The cofactor is Mg(2+). Requires Mn(2+) as cofactor.

Its subcellular location is the cytoplasm. The catalysed reaction is 2 D-alanine + ATP = D-alanyl-D-alanine + ADP + phosphate + H(+). It participates in cell wall biogenesis; peptidoglycan biosynthesis. In terms of biological role, cell wall formation. The protein is D-alanine--D-alanine ligase of Corynebacterium glutamicum (strain R).